The chain runs to 787 residues: MAQSNWEADKMLDVYIYDYLVKKKLHNTAKSFMTEGKVSPDPVAIDAPGGFLFEWWSVFWDIFIARTNEKHSEAAAAYIEAQQGKAKEQQMQIQQLQMMRQAQMQRRDPNHPSLGGPMNAIGSEGMIGQSNASALAAKMYEERMKQPNPMNSETSQPHLDARMALLKSATNHHGQIVQGNHQGGVSAALQQIQSRTQQPTEIKTEVNLGTSPRQLPVDPSTVYGQGILQSKPGMGSAGLNPGVSGLPLKGWPLTGIEQMRPGLGGPQVQKSFLQNQSQFQLSPQQQQHQMLAQVQAQGNMTNSPMYGGDMDPRRFTGLPRGNLNPKDGQQNANDGSIGSPMQSSSSKHISMPPVQQSSSQQQDHLLSQQSQQNNRKRKGPSSSGPANSTGTGNTVGPSNSQPSTPSTHTPVDGVAIAGNMHHVNSMPKGPMMYGSDGIGGLASSANQLLQDDMDQFGDVGALEDNVESFLSQDDGDGGSLFGTLKRNSSVHTETSKPFSFNEVSCIRKSASKVICCSFSYDGKLLASAGHDKKVFIWNMETLQVESTPEEHAHIITDVRFRPNSTQLATSSFDKTIKIWDASDPGYFLRTISGHAAPVMSIDFHPKKTELLCSCDSNNDIRFWDINASCVRAVKGASTQVRFQPRTGQFLAAASENTVSIFDIENNNKRVNIFKGHSSNVHSVCWSPNGELVASVSEDAVKLWSLSSGDCIHELSNSGNKFHSVVFHPSYPDLLVIGGYQAIELWNTMENKCMTVAGHECVISALAQSPSTGVVASASHDKSVKIWK.

Residues 1–88 (MAQSNWEADK…IEAQQGKAKE (88 aa)) are required for SEU-binding. One can recognise a LisH domain in the interval 8-40 (ADKMLDVYIYDYLVKKKLHNTAKSFMTEGKVSP). The stretch at 77-106 (AYIEAQQGKAKEQQMQIQQLQMMRQAQMQR) forms a coiled coil. Positions 299–413 (NMTNSPMYGG…TPSTHTPVDG (115 aa)) are disordered. Low complexity-rich tracts occupy residues 336 to 346 (SIGSPMQSSSS) and 355 to 372 (QQSS…QSQQ). The span at 380–409 (PSSSGPANSTGTGNTVGPSNSQPSTPSTHT) shows a compositional bias: polar residues. 7 WD repeats span residues 508-547 (KSAS…VEST), 550-589 (EHAH…YFLR), 593-633 (GHAA…VRAV), 635-671 (GAST…KRVN), 675-715 (GHSS…HELS), 717-755 (SGNK…CMTV), and 757-787 (GHEC…KIWK).

In terms of assembly, forms corepressor complexes with SLK1 and SLK2; LUH is the transcription repressor subunit and SLK1 and SLK2 the specific DNA-binding adapters. Interacts with SEU. Binds to YAB3, YAB5 and YAB1/FIL; these complexes promote adaxial cell identity in leaves as well as embryonic shoot apical meristem (SAM) initiation and postembryonic SAM maintenance. As to expression, expressed in roots, stems, leaves, seedlings, apex, flowers, siliques, flower organs and seeds (including seed coat).

It is found in the nucleus. Its function is as follows. Transcription repressor subunit of the SEU-SLK1 and SEU-SLK2 transcriptional corepressor of abiotic stress (e.g. salt and osmotic stress) response genes, by means of an epigenetic process involving histone modification (e.g. H3K9 and H3K14 acetylation), probably by recruiting HDAC, to facilitate the condensation of chromatin thus preventing transcription at the target genes. Can also act as a transcription activator. Implicated in embryo and floral development. Involved in post-synthesis cell wall modifications necessary for mucilage extrusion from seeds upon imbibition, probably by promoting the expression of genes required for mucilage maturation (e.g. MUM2). Regulates the maintenance on leaf polarity and meristem activity as well as the initiation of embryonic shoot apical meristem (SAM) development. This Arabidopsis thaliana (Mouse-ear cress) protein is Transcriptional corepressor LEUNIG_HOMOLOG.